The primary structure comprises 127 residues: Large ribosomal subunit protein bL12 (127 aa).

It belongs to the bacterial ribosomal protein bL12 family. In terms of assembly, homodimer. Part of the ribosomal stalk of the 50S ribosomal subunit. Forms a multimeric L10(L12)X complex, where L10 forms an elongated spine to which 2 to 4 L12 dimers bind in a sequential fashion. Binds GTP-bound translation factors.

In terms of biological role, forms part of the ribosomal stalk which helps the ribosome interact with GTP-bound translation factors. Is thus essential for accurate translation. This chain is Large ribosomal subunit protein bL12, found in Pelobacter propionicus (strain DSM 2379 / NBRC 103807 / OttBd1).